We begin with the raw amino-acid sequence, 165 residues long: Endoribonuclease YbeY (165 aa).

Zn(2+) is bound by residues H119, H123, and H129.

It belongs to the endoribonuclease YbeY family. Zn(2+) is required as a cofactor.

It is found in the cytoplasm. Single strand-specific metallo-endoribonuclease involved in late-stage 70S ribosome quality control and in maturation of the 3' terminus of the 16S rRNA. This Streptomyces griseus subsp. griseus (strain JCM 4626 / CBS 651.72 / NBRC 13350 / KCC S-0626 / ISP 5235) protein is Endoribonuclease YbeY.